We begin with the raw amino-acid sequence, 401 residues long: MIVQDSVCSELMRGCEEILPVPELEKKLQKGIPLKIKAGFDPTAPDLHLGHTVLLNKLRQFQQFGHEVIFLIGDFTAMIGDPTGKNVTRMPLSQETVLENAKTYQHQVFKILDPDKTTVAFNSQWLNKFNAVDLIRLAATHTVARMLERDDFNKRYTTGQPIAIHEFLYPLLQGYDSVALKADVELGGTDQKFNLLMGRELQKHYGFEPQVVMMTPLIEGLDGVKKMSKSLDNYIGINETPEQMFGKIMSVSDELMWRYIDLLSFKTGKEIQQLKQSVLEGKNPRDVKIDFAKEIVARFHDQTQAEFAHNKFIERFQKGNIPEDLEELSLVIAEPIALAQLLKQIDLTASTSESIRMVKQGAVKVDGDKISDPSLKLPIGKSYIIQVGKRRIAKLSIQQAD.

Residues 42 to 51 (PTAPDLHLGH) carry the 'HIGH' region motif. The short motif at 226–230 (KMSKS) is the 'KMSKS' region element. Lysine 229 contributes to the ATP binding site. An S4 RNA-binding domain is found at 336–397 (IALAQLLKQI…GKRRIAKLSI (62 aa)).

This sequence belongs to the class-I aminoacyl-tRNA synthetase family. TyrS type 2 subfamily. Homodimer.

It is found in the cytoplasm. It catalyses the reaction tRNA(Tyr) + L-tyrosine + ATP = L-tyrosyl-tRNA(Tyr) + AMP + diphosphate + H(+). In terms of biological role, catalyzes the attachment of tyrosine to tRNA(Tyr) in a two-step reaction: tyrosine is first activated by ATP to form Tyr-AMP and then transferred to the acceptor end of tRNA(Tyr). This Legionella pneumophila subsp. pneumophila (strain Philadelphia 1 / ATCC 33152 / DSM 7513) protein is Tyrosine--tRNA ligase.